Here is a 157-residue protein sequence, read N- to C-terminus: Peptide methionine sulfoxide reductase MsrA (157 aa).

Cys-10 is an active-site residue.

Belongs to the MsrA Met sulfoxide reductase family.

It catalyses the reaction L-methionyl-[protein] + [thioredoxin]-disulfide + H2O = L-methionyl-(S)-S-oxide-[protein] + [thioredoxin]-dithiol. The catalysed reaction is [thioredoxin]-disulfide + L-methionine + H2O = L-methionine (S)-S-oxide + [thioredoxin]-dithiol. Has an important function as a repair enzyme for proteins that have been inactivated by oxidation. Catalyzes the reversible oxidation-reduction of methionine sulfoxide in proteins to methionine. In Clostridium perfringens (strain SM101 / Type A), this protein is Peptide methionine sulfoxide reductase MsrA.